Here is a 40-residue protein sequence, read N- to C-terminus: Photosystem II reaction center protein J (40 aa).

A helical transmembrane segment spans residues 8–28 (IPLWVVATIAGLGVITVVGIF).

Belongs to the PsbJ family. As to quaternary structure, PSII is composed of 1 copy each of membrane proteins PsbA, PsbB, PsbC, PsbD, PsbE, PsbF, PsbH, PsbI, PsbJ, PsbK, PsbL, PsbM, PsbT, PsbX, PsbY, PsbZ, Psb30/Ycf12, peripheral proteins PsbO, CyanoQ (PsbQ), PsbU, PsbV and a large number of cofactors. It forms dimeric complexes.

Its subcellular location is the cellular thylakoid membrane. In terms of biological role, one of the components of the core complex of photosystem II (PSII). PSII is a light-driven water:plastoquinone oxidoreductase that uses light energy to abstract electrons from H(2)O, generating O(2) and a proton gradient subsequently used for ATP formation. It consists of a core antenna complex that captures photons, and an electron transfer chain that converts photonic excitation into a charge separation. The sequence is that of Photosystem II reaction center protein J from Nostoc sp. (strain PCC 7120 / SAG 25.82 / UTEX 2576).